The following is a 177-amino-acid chain: Putative zinc finger protein 826 (177 aa).

Residues 99 to 114 form a C2H2-type 1; degenerate zinc finger; the sequence is KTFTWSSSPHKHRRTH. A C2H2-type 2; degenerate zinc finger spans residues 120–142; that stretch reads YKCEECGKAFTASSTLSEYKTIH. A C2H2-type 3 zinc finger spans residues 148–170; it reads CKCEECGKAFNWSSDFNKHKRIH.

It is found in the nucleus. May be involved in transcriptional regulation. This chain is Putative zinc finger protein 826 (ZNF826P), found in Homo sapiens (Human).